The sequence spans 561 residues: Long-chain-fatty-acid--CoA ligase (561 aa).

213-224 provides a ligand contact to ATP; that stretch reads YTGGTTGVAKGA.

It belongs to the ATP-dependent AMP-binding enzyme family. The cofactor is Mg(2+).

The protein localises to the membrane. The enzyme catalyses a long-chain fatty acid + ATP + CoA = a long-chain fatty acyl-CoA + AMP + diphosphate. It participates in lipid metabolism; fatty acid beta-oxidation. In terms of biological role, catalyzes the esterification, concomitant with transport, of exogenous long-chain fatty acids into metabolically active CoA thioesters for subsequent degradation or incorporation into phospholipids. The polypeptide is Long-chain-fatty-acid--CoA ligase (fadD) (Escherichia coli O157:H7).